The sequence spans 353 residues: UPF0283 membrane protein YcjF (353 aa).

Basic and acidic residues predominate over residues 1 to 19 (MSEPLKPRIDFAEPLKEEP). The tract at residues 1–35 (MSEPLKPRIDFAEPLKEEPTSAFKAQQTFSEAESR) is disordered. 3 consecutive transmembrane segments (helical) span residues 70–90 (MVMGGLALFGASVVGQGVQWT), 100–120 (VALGGCAAGALIVGAGVGSVV), and 213–233 (ESTLMIAVSPLALVDMAFIAW).

The protein belongs to the UPF0283 family.

It is found in the cell inner membrane. The chain is UPF0283 membrane protein YcjF from Salmonella paratyphi A (strain AKU_12601).